The chain runs to 151 residues: Small ribosomal subunit protein uS19 (151 aa).

The protein belongs to the universal ribosomal protein uS19 family.

In terms of biological role, protein S19 forms a complex with S13 that binds strongly to the 16S ribosomal RNA. This is Small ribosomal subunit protein uS19 (rps19) from Thermoplasma acidophilum (strain ATCC 25905 / DSM 1728 / JCM 9062 / NBRC 15155 / AMRC-C165).